The sequence spans 284 residues: Pantothenate synthetase (284 aa).

30–37 (MGNLHEGH) is an ATP binding site. Histidine 37 acts as the Proton donor in catalysis. Glutamine 61 contacts (R)-pantoate. Glutamine 61 contributes to the beta-alanine binding site. 149–152 (GEKD) contacts ATP. Glutamine 155 contributes to the (R)-pantoate binding site. ATP contacts are provided by residues valine 178 and 186–189 (LSSR).

The protein belongs to the pantothenate synthetase family. Homodimer.

Its subcellular location is the cytoplasm. The catalysed reaction is (R)-pantoate + beta-alanine + ATP = (R)-pantothenate + AMP + diphosphate + H(+). Its pathway is cofactor biosynthesis; (R)-pantothenate biosynthesis; (R)-pantothenate from (R)-pantoate and beta-alanine: step 1/1. In terms of biological role, catalyzes the condensation of pantoate with beta-alanine in an ATP-dependent reaction via a pantoyl-adenylate intermediate. This Yersinia pestis bv. Antiqua (strain Antiqua) protein is Pantothenate synthetase.